Consider the following 124-residue polypeptide: Apolipoprotein C-IV (124 aa).

The N-terminal stretch at 1–27 (MLLPRRGLRTLPSLCLYILVLVWVVAC) is a signal peptide.

This sequence belongs to the apolipoprotein C4 family. Post-translationally, glycosylated; contains sialic acid. Present in up to five sialylated isoforms. As to expression, blood plasma, associated primarily with VLDL and HDL. Expressed mainly in the liver.

Its subcellular location is the secreted. In terms of biological role, may participate in lipoprotein metabolism. The protein is Apolipoprotein C-IV (APOC4) of Oryctolagus cuniculus (Rabbit).